The primary structure comprises 314 residues: DDRGK domain-containing protein 1 (314 aa).

The helical transmembrane segment at 1–28 (MVAPVWYLVAAALLVGFILFLTRSRGRA) threads the bilayer. The mediates interaction with CDK5RAP3 stretch occupies residues 1 to 114 (MVAPVWYLVA…VEKPAETHLS (114 aa)). Over 29 to 314 (ASAGQEPLHN…GRESPAQAPA (286 aa)) the chain is Cytoplasmic. Disordered stretches follow at residues 31 to 75 (AGQE…SRLQ) and 100 to 186 (QEEE…QREH). Phosphoserine is present on residues Ser72 and Ser114. Residues 118–216 (GAKKLRKLEE…MTEEQSQSFL (99 aa)) form a mediates interaction with TRIP4 region. The span at 124–186 (KLEEKQARKA…AREEQAQREH (63 aa)) shows a compositional bias: basic and acidic residues. A UFM1-interacting motif (UFIM) motif is present at residues 195–209 (AFVVEEEGVGETMTE). The segment at 216–314 (LTEFINYIKQ…GRESPAQAPA (99 aa)) is mediates interaction with UFL1. The PCI domain occupies 229–273 (VLLEDLASQVGLRTQDTINRIQDLLAEGTITGVIDDRGKFIYITP). A Glycyl lysine isopeptide (Lys-Gly) (interchain with G-Cter in UFM1) cross-link involves residue Lys267.

It belongs to the DDRGK1 family. Component of the UFM1 ribosome E3 ligase (UREL) complex, composed of UFL1, DDRGK1 and CDK5RAP3. Interacts with (unphosphorylated) ERN1/IRE1-alpha; interaction is dependent on UFM1 and takes place in response to endoplasmic reticulum stress, regulating ERN1/IRE1-alpha stability. Interacts with NFKBIA. Interacts with SOX9. Ubiquitinated. Ubiquitination probably triggers proteasomal degradation and is negatively regulated by UFL1, the enzyme involved in the ufmylation of DDRGK1. In terms of processing, ufmylated; conjugated to ubiquitin-like protein UFM1, probably at Lys-267 by UFL1. The relevance of ufmylation is however unclear: as DDRGK1 acts as a substrate adapters for ufmylation, it is uncertain whether ufmylation is a collateral effect of ufmylation process or is required to regulate its activity. Widely expressed (at protein level). In the brain, highest levels in medulla oblongata, followed by cerebral cortex, cerebellum and frontal lobe.

Its subcellular location is the endoplasmic reticulum membrane. Its function is as follows. Component of the UFM1 ribosome E3 ligase (UREL) complex, a multiprotein complex that catalyzes ufmylation of endoplasmic reticulum-docked proteins. The UREL complex plays a key role in ribosome recycling by mediating mono-ufmylation of the RPL26/uL24 subunit of the 60S ribosome following ribosome dissociation: ufmylation weakens the junction between post-termination 60S subunits and SEC61 translocons, promoting release and recycling of the large ribosomal subunit from the endoplasmic reticulum membrane. Ufmylation of RPL26/uL24 and subsequent 60S ribosome recycling either take place after normal termination of translation or after ribosome stalling during cotranslational translocation at the endoplasmic reticulum. Within the UREL complex, DDRGK1 tethers the complex to the endoplasmic reticulum membrane to restrict its activity to endoplasmic reticulum-docked ribosomes and acts as an ufmylation 'reader': following RPL26/uL24 ufmylation, DDRGK1 specifically binds to ufmylated RPL26/uL24 via its UFIM motif, resulting in stable association between the 60S ribosome and the UREL complex, followed by dissociation of the 60S ribosome subunit from the endoplasmic reticulum membrane. The UREL complex is also involved in reticulophagy in response to endoplasmic reticulum stress by promoting ufmylation of proteins such as CYB5R3 and RPN1, thereby promoting lysosomal degradation of ufmylated proteins. Ufmylation-dependent reticulophagy inhibits the unfolded protein response (UPR) by regulating ERN1/IRE1-alpha stability. Acts as a regulator of immunity by promoting differentiation of B-cells into plasma cells: acts by promoting expansion of the endoplasmic reticulum and regulating the unfolded protein response (UPR). May also be required for TRIP4 ufmylation. May play a role in NF-kappa-B-mediated transcription through regulation of the phosphorylation and the degradation of NFKBIA, the inhibitor of NF-kappa-B. Plays a role in cartilage development through SOX9, inhibiting the ubiquitin-mediated proteasomal degradation of this transcriptional regulator. Required for stabilization and ufmylation of ATG9A. The chain is DDRGK domain-containing protein 1 from Homo sapiens (Human).